Consider the following 235-residue polypeptide: MSCQSPIVVALDYPTMAQSIEMAKRLDPEQCRVKVGKELFTTAGPVILDELHKLGFEIFLDLKFHDIPNTVANAVCVAAKAGVWMVNVHASGGRRMMEASANALQKLPDNKTLLIAVTVLTSMDQSDLIEIGIDATPEQHVKRLAALAKSSGMDGVVCSAQESSMLSAELGKDFVLVTPGIRPAGSDQGDQKRIMTPVEAMAAGSHYLVMGRPITQANDPIAVLTQANADLGLMA.

Substrate is bound by residues aspartate 12, lysine 34, 61 to 70 (DLKFHDIPNT), threonine 121, arginine 182, glutamine 191, glycine 211, and arginine 212. The Proton donor role is filled by lysine 63.

This sequence belongs to the OMP decarboxylase family. Type 1 subfamily. In terms of assembly, homodimer.

It catalyses the reaction orotidine 5'-phosphate + H(+) = UMP + CO2. It functions in the pathway pyrimidine metabolism; UMP biosynthesis via de novo pathway; UMP from orotate: step 2/2. In terms of biological role, catalyzes the decarboxylation of orotidine 5'-monophosphate (OMP) to uridine 5'-monophosphate (UMP). The chain is Orotidine 5'-phosphate decarboxylase from Marinomonas sp. (strain MWYL1).